Here is a 214-residue protein sequence, read N- to C-terminus: DNA-binding protein HupB (214 aa).

Residue K3 is modified to N6-acetyllysine. K3 carries the post-translational modification N6-succinyllysine. A phosphothreonine mark is found at T43 and T45. K72, K86, and K103 each carry N6-acetyllysine. A disordered region spans residues 100–214 (PAVKRGVGAS…KKATARRGRK (115 aa)). Over residues 102–112 (VKRGVGASAAK) the composition is skewed to low complexity. At K113 the chain carries N6-succinyllysine. The segment covering 113 to 214 (KVAKKAPAKK…KKATARRGRK (102 aa)) has biased composition (basic residues). N6-acetyllysine is present on residues K116 and K133. N6-succinyllysine is present on K142. 2 positions are modified to N6-acetyllysine: K146 and K167.

The protein belongs to the bacterial histone-like protein family. Long actinobacterial subfamily. As to quaternary structure, oligomerizes. Homodimer; the crystallized protein is missing the C-terminal 105 residues. Interacts with topoisomerase 1 (topA). Interacts with Eis. Interacts with NAD-dependent protein deacylase NPD (MRA_1161). Interacts with MRA_0812 CoA transferase. In terms of processing, phosphorylated in vivo on Ser and Thr-residues; the protein is degraded during purification so most sites were not identified, but at least one of Thr-43 and/or Thr-45 are modified in vivo. In vitro at least PknE, PknF and PknB phosphorylate HupB; PknE is the most active and phosphorylates many sites in vitro including Thr-43 and Thr-45. Acetylated on 8 Lys residues in vivo (probably by Eis). In vitro acetylated by Eis on 28 residues (strains H37Rv and H37Ra), many more than those identified in vivo. Also acetylated by MRA_0812. Deacetylated in vitro by NAD-dependent protein deacylase NPD (MRA_1161). Post-translationally, succinylated in vivo and in vitro by MRA_0812 and by Eis; only 3 residues are found to be succinylated in vivo, while 27 are modifed in vitro by MRA_0812 and 32 are succinylated by Eis. NAD-dependent protein deacylase (MRA_1161) desuccinylates this protein.

It localises to the cytoplasm. The protein resides in the nucleoid. The enzyme catalyses 4 Fe(2+) + O2 + 4 H(+) = 4 Fe(3+) + 2 H2O. With respect to regulation, two trans-stilbene derivatives, 4,4'-[(E)-ethene-1,2 diylbis({5[(phenylcarbonyl)amino]benzene-2,1-diyl}sulfonylimino)] dibenzoic acid and its methoxy derivative 4,4'-[1,2-ethenediylbis({5-[(4-methoxybenzoyl)amino]-2,1phenylene}sulfonylimino)] dibenzoic acid, respectively SD1 and SD4, inhibit DNA binding with 50% inhibition at 20 uM for SD1 and 1.7 uM for SD4. SD1 and SD4 have minimal inhibitory concentrations of 400 and 800 uM on strain H37Ra respectively. Functionally, a nucleoid-associated protein (NAP) that plays a role in local chromosome architecture. Binds DNA non-sequence specifically; in vitro phosphorylation of an N-terminal fragment decreases DNA-binding. Stimulates supercoiling relaxation by topoisomerase 1 (Top1, topA), at higher than 80 uM inhibits relaxation, has no effect on DNA gyrase; the effect is independent of DNA-binding. Increases the intervening strand passage activity of Top1 that occurs between the two catalytic trans-esterification reactions. Does not bind ssDNA, probably helps condense chromosomes. Binds dsDNA; in vitro acetylated protein binds 10-fold less well to DNA (note in vitro acetylated protein is more heavily modified than in vivo modified protein). In vitro acetylated protein compacts DNA less well than unmodified protein. In vitro succinylated DNA bind dsDNA less well than unmodified protein (note in vitro succinylated protein is more heavily modified than in vivo modified protein). Its function is as follows. Has ferroxidase activity, converts Fe(2+) into Fe(3+). Binds Fe(3+) but not Fe(2+); prevents the generation of hydroxyl radicals by the Fenton reaction and thus protects DNA from damage. May function in iron storage. In terms of biological role, required for biofilm formation; trimethylation by recombinant human SUV39H1 (a histone methyltransferase) inhibits biofilm formation. Probably influences transcription. RNase E and HupB jointly contribute to cellular adaptation to changing growth conditions and survival during antibiotic treatment and in the host. This is DNA-binding protein HupB from Mycobacterium tuberculosis (strain ATCC 25177 / H37Ra).